A 374-amino-acid polypeptide reads, in one-letter code: N5-carboxyaminoimidazole ribonucleotide synthase (374 aa).

ATP contacts are provided by residues Arg108, Lys148, 153–159 (GYDGKGQ), 183–186 (EKYL), Glu191, His214, and 266–267 (NE). Residues 112-296 (KETLKSAGTK…QFDTHILAVT (185 aa)) enclose the ATP-grasp domain.

It belongs to the PurK/PurT family. In terms of assembly, homodimer.

The enzyme catalyses 5-amino-1-(5-phospho-beta-D-ribosyl)imidazole + hydrogencarbonate + ATP = 5-carboxyamino-1-(5-phospho-D-ribosyl)imidazole + ADP + phosphate + 2 H(+). It functions in the pathway purine metabolism; IMP biosynthesis via de novo pathway; 5-amino-1-(5-phospho-D-ribosyl)imidazole-4-carboxylate from 5-amino-1-(5-phospho-D-ribosyl)imidazole (N5-CAIR route): step 1/2. Functionally, catalyzes the ATP-dependent conversion of 5-aminoimidazole ribonucleotide (AIR) and HCO(3)(-) to N5-carboxyaminoimidazole ribonucleotide (N5-CAIR). The sequence is that of N5-carboxyaminoimidazole ribonucleotide synthase from Staphylococcus aureus (strain Mu50 / ATCC 700699).